The chain runs to 360 residues: Nodulin-44 (360 aa).

The first 23 residues, 1-23, serve as a signal peptide directing secretion; it reads MEEKILMRVIVITVFLFIGAATA. Disordered regions lie at residues 123–148 and 228–249; these read FSPRGRRSKLDNHQTDAGTLGKVIPL and FSPRGRRSKLDNHQTDAGTLGR.

The protein belongs to the nodulin 20 family.

This Glycine max (Soybean) protein is Nodulin-44.